A 258-amino-acid chain; its full sequence is Serine/arginine-rich splicing factor x16 (258 aa).

The RRM domain occupies 8 to 81 (RKVYVGDLGN…RRARVELSTG (74 aa)). Disordered stretches follow at residues 81 to 113 (GKYA…GGRG) and 130 to 258 (CRER…VSRD). Over residues 86–103 (SGGGGGGGGGGGGGGGLG) the composition is skewed to gly residues. The span at 104–113 (GRDRGGGGRG) shows a compositional bias: basic and acidic residues. Residues 116–132 (KCYECGGRGHFARHCRE) form a CCHC-type zinc finger. Composition is skewed to basic residues over residues 130–141 (CRERKARQRRRS) and 149–166 (STSR…RSRS). 2 stretches are compositionally biased toward basic and acidic residues: residues 180–197 (NGRD…HERN) and 210–221 (RRYEDEDDDRVR). Composition is skewed to low complexity over residues 231–240 (RSASPAVRRG) and 249–258 (SSASRSVSRD).

As to quaternary structure, interacts (via Arg/Ser-rich region) with Alsin2/CG7564, Rbp1 and Doa (via N-terminus). In terms of processing, highly phosphorylated. May be phosphorylated by the serine/threonine-protein kinase Doa.

Its subcellular location is the nucleus. Serine/arginine-rich splicing factor (SR protein) involved in differential exon usage during RNA transcript processing, probably by binding exonic splicing enhancer elements and recruiting components of the splicing machinery. Binds RNA stem-loop structures with consensus sequence 5'-CCGUNUNKNW-3'. Regulator of genes involved in lipid and carbohydrate metabolism, the immune response and the response to xenobiotics. This Drosophila melanogaster (Fruit fly) protein is Serine/arginine-rich splicing factor x16.